A 186-amino-acid chain; its full sequence is Ribosome-recycling factor (186 aa).

Belongs to the RRF family.

It is found in the cytoplasm. Functionally, responsible for the release of ribosomes from messenger RNA at the termination of protein biosynthesis. May increase the efficiency of translation by recycling ribosomes from one round of translation to another. The protein is Ribosome-recycling factor of Porphyromonas gingivalis (strain ATCC BAA-308 / W83).